We begin with the raw amino-acid sequence, 533 residues long: uncharacterized protein (533 aa).

A disordered region spans residues 1–26 (MKRFFSKLFSKSPTSGRVPSPDSDYS). 2 positions are modified to phosphoserine: Ser-20 and Ser-23. A Phosphotyrosine modification is found at Tyr-25. A Phosphoserine modification is found at Ser-26. 10 consecutive transmembrane segments (helical) span residues 178–198 (ILAV…HILI), 213–230 (YMRV…FEAL), 242–264 (PITY…LVWH), 274–296 (APVA…ICFS), 313–333 (LSPM…EWAA), 353–373 (SILL…AVAS), 394–414 (RVAY…IFCF), 435–455 (IFPI…GGGL), 466–486 (GLIS…FVVV), and 495–515 (IWCG…TVLF).

It belongs to the multi antimicrobial extrusion (MATE) (TC 2.A.66.1) family.

The protein resides in the vacuole membrane. This is an uncharacterized protein from Schizosaccharomyces pombe (strain 972 / ATCC 24843) (Fission yeast).